The chain runs to 204 residues: Protein GET1 (204 aa).

Topologically, residues 1–4 (MPSL) are lumenal. The chain crosses the membrane as a helical span at residues 5–24 (LLIIFVTELVVQLVNTLGAT). Topologically, residues 25-110 (TINDLLWRIY…KFDRTLTTTR (86 aa)) are cytoplasmic. The stretch at 72 to 107 (AKWAKLRRQHDKLLEDLEKKKASLEAARTKFDRTLT) forms a coiled coil. A helical transmembrane segment spans residues 111–131 (TVSTRSVQWFLPFWYSKEPMF). At 132–155 (WLPYGWFPYYVEWFASFPRAPMGS) the chain is on the lumenal side. Residues 156–172 (VSIVVWQWACTAVIALM) form a helical membrane-spanning segment. Over 173–204 (IEAATAALVYVAAKQSQKIRQPVPAQSEKKDS) the chain is Cytoplasmic.

It belongs to the WRB/GET1 family. As to quaternary structure, interacts with GET3.

The protein resides in the endoplasmic reticulum membrane. Required for the post-translational delivery of tail-anchored (TA) proteins to the endoplasmic reticulum. Acts as a membrane receptor for soluble GET3, which recognizes and selectively binds the transmembrane domain of TA proteins in the cytosol. The protein is Protein GET1 of Podospora anserina (strain S / ATCC MYA-4624 / DSM 980 / FGSC 10383) (Pleurage anserina).